Here is a 589-residue protein sequence, read N- to C-terminus: ATP-dependent lipid A-core flippase (589 aa).

The next 5 membrane-spanning stretches (helical) occupy residues 29–49, 70–90, 157–177, 261–281, and 283–303; these read LLLV…TGFL, WLPV…YITD, VIGA…TILV, MIGA…ALAG, and LTAG…PGLK. Residues 32–314 enclose the ABC transmembrane type-1 domain; sequence VAALIAALIE…LTNVQNMVQR (283 aa). Positions 346 to 582 constitute an ABC transporter domain; the sequence is IEFRDVTARY…GGLYSHLHGM (237 aa). 380-387 provides a ligand contact to ATP; sequence GRSGSGKS.

This sequence belongs to the ABC transporter superfamily. Lipid exporter (TC 3.A.1.106) family. Homodimer.

The protein localises to the cell inner membrane. It catalyses the reaction ATP + H2O + lipid A-core oligosaccharideSide 1 = ADP + phosphate + lipid A-core oligosaccharideSide 2.. In terms of biological role, involved in lipopolysaccharide (LPS) biosynthesis. Translocates lipid A-core from the inner to the outer leaflet of the inner membrane. Transmembrane domains (TMD) form a pore in the inner membrane and the ATP-binding domain (NBD) is responsible for energy generation. The sequence is that of ATP-dependent lipid A-core flippase from Xanthomonas euvesicatoria pv. vesicatoria (strain 85-10) (Xanthomonas campestris pv. vesicatoria).